The following is a 505-amino-acid chain: MSDLIRRTAVELAAMIAAREVSAEEVTRAHLDRIAAVDPAVHAFLYVDADGALTAARAVDARLAAGERLGPLAGVPLALKDVFTTRGMPTTCGSKILEGWIPPYDATVVQKIRDAGIVILGKTNMDEFAMGSSTENSAFGPTRNPWDLSRIPGGSSGGSAAAVAAFEAPLAIGTDTGGSIRQPAAVTGIVGTKPTYGGVSRYGLVAFSSSLDQAGPFARTVLDAAYLHAAIAGHDPRDATSIDAPVPDVVAAARNGDVRGLRIGVVRELDGDGYDPGVRHQFHQAVKLLADLGADVGEVSCPHFEYALAAYYLIAPSECSSNLARFDAMRYGLRLGDDGTRTAEDVMALTRAAGFGAEVKRRIMLGTYALSSGYYEAYYGSAQKVRTLIIQDFAAAFEKFDVLISPTTPTTAFPLGERVDDPLKMYLADLDTIPVNLAGNAAMSVPIGCSPDDGLPVGLQIMAPVLADDRLYRVGAALEAAYRERTGRLLIEDVPDPAANQEGAA.

Catalysis depends on charge relay system residues lysine 80 and serine 155. Serine 179 acts as the Acyl-ester intermediate in catalysis.

This sequence belongs to the amidase family. GatA subfamily. In terms of assembly, heterotrimer of A, B and C subunits.

It carries out the reaction L-glutamyl-tRNA(Gln) + L-glutamine + ATP + H2O = L-glutaminyl-tRNA(Gln) + L-glutamate + ADP + phosphate + H(+). Allows the formation of correctly charged Gln-tRNA(Gln) through the transamidation of misacylated Glu-tRNA(Gln) in organisms which lack glutaminyl-tRNA synthetase. The reaction takes place in the presence of glutamine and ATP through an activated gamma-phospho-Glu-tRNA(Gln). This is Glutamyl-tRNA(Gln) amidotransferase subunit A from Acidothermus cellulolyticus (strain ATCC 43068 / DSM 8971 / 11B).